A 179-amino-acid chain; its full sequence is Large ribosomal subunit protein uL5 (179 aa).

Belongs to the universal ribosomal protein uL5 family. In terms of assembly, part of the 50S ribosomal subunit; part of the 5S rRNA/L5/L18/L25 subcomplex. Contacts the 5S rRNA and the P site tRNA. Forms a bridge to the 30S subunit in the 70S ribosome.

This is one of the proteins that bind and probably mediate the attachment of the 5S RNA into the large ribosomal subunit, where it forms part of the central protuberance. In the 70S ribosome it contacts protein S13 of the 30S subunit (bridge B1b), connecting the 2 subunits; this bridge is implicated in subunit movement. Contacts the P site tRNA; the 5S rRNA and some of its associated proteins might help stabilize positioning of ribosome-bound tRNAs. The protein is Large ribosomal subunit protein uL5 of Aliivibrio salmonicida (strain LFI1238) (Vibrio salmonicida (strain LFI1238)).